A 356-amino-acid chain; its full sequence is MTTLYSDWATESFEYDESSEACFIGDIVAFGTIFLSIFYSLVFAFGLVGNLLVVCALTSSRKPKSITDIYLLNLALSDLLFVATLPFWTHYVISEQGFHNAVCKLTTALFFIGFFGGIFFITVISIDRYMAIVLAANSINNRTVQHGVTTSLGVWAAAILVAAPQFMFTKQKGNECLGDYPEVLQDIWPVLRNTEANFLGFLLPVLIMSYCYFRIIQTLFSCKNHKKAKAIKLILLVVIVFFLFWTPYNVMIFLETLKLYGFFPNCDMKRDLRLALSVTETVAFSHCCLNPLIYAFAGQKFRRYLRHLSRKCQAVLCGRPVHVSFSPSESQRSRQESIVSSNFTHYTSDGDASLLL.

Residues 1 to 26 (MTTLYSDWATESFEYDESSEACFIGD) are Extracellular-facing. The chain crosses the membrane as a helical span at residues 27–47 (IVAFGTIFLSIFYSLVFAFGL). Residues 48-68 (VGNLLVVCALTSSRKPKSITD) lie on the Cytoplasmic side of the membrane. A helical transmembrane segment spans residues 69–89 (IYLLNLALSDLLFVATLPFWT). The Extracellular segment spans residues 90 to 105 (HYVISEQGFHNAVCKL). Cysteine 103 and cysteine 176 are oxidised to a cystine. A helical transmembrane segment spans residues 106–126 (TTALFFIGFFGGIFFITVISI). At 127-147 (DRYMAIVLAANSINNRTVQHG) the chain is on the cytoplasmic side. Residues 148 to 168 (VTTSLGVWAAAILVAAPQFMF) traverse the membrane as a helical segment. Residues 169–195 (TKQKGNECLGDYPEVLQDIWPVLRNTE) are Extracellular-facing. The helical transmembrane segment at 196–216 (ANFLGFLLPVLIMSYCYFRII) threads the bilayer. Topologically, residues 217 to 232 (QTLFSCKNHKKAKAIK) are cytoplasmic. A helical transmembrane segment spans residues 233–253 (LILLVVIVFFLFWTPYNVMIF). Residues 254–277 (LETLKLYGFFPNCDMKRDLRLALS) lie on the Extracellular side of the membrane. A helical transmembrane segment spans residues 278-298 (VTETVAFSHCCLNPLIYAFAG). At 299–356 (QKFRRYLRHLSRKCQAVLCGRPVHVSFSPSESQRSRQESIVSSNFTHYTSDGDASLLL) the chain is on the cytoplasmic side. Phosphothreonine is present on threonine 347.

Belongs to the G-protein coupled receptor 1 family. As to quaternary structure, found in a ternary complex with CX3CL1 and ITGAV:ITGB3 or ITGA4:ITGB1. In terms of processing, this protein is not N-glycosylated which is unusual for G-protein-coupled receptors.

It is found in the cell membrane. Its function is as follows. Receptor for the C-X3-C chemokine fractalkine (CX3CL1) present on many early leukocyte cells; CX3CR1-CX3CL1 signaling exerts distinct functions in different tissue compartments, such as immune response, inflammation, cell adhesion and chemotaxis. CX3CR1-CX3CL1 signaling mediates cell migratory functions. Responsible for the recruitment of natural killer (NK) cells to inflamed tissues. Acts as a regulator of inflammation process leading to atherogenesis by mediating macrophage and monocyte recruitment to inflamed atherosclerotic plaques, promoting cell survival. Involved in airway inflammation by promoting interleukin 2-producing T helper (Th2) cell survival in inflamed lung. Involved in the migration of circulating monocytes to non-inflamed tissues, where they differentiate into macrophages and dendritic cells. Acts as a negative regulator of angiogenesis, probably by promoting macrophage chemotaxis. Plays a key role in brain microglia by regulating inflammatory response in the central nervous system (CNS) and regulating synapse maturation. Required to restrain the microglial inflammatory response in the CNS and the resulting parenchymal damage in response to pathological stimuli. Involved in brain development by participating in synaptic pruning, a natural process during which brain microglia eliminates extra synapses during postnatal development. Synaptic pruning by microglia is required to promote the maturation of circuit connectivity during brain development. Acts as an important regulator of the gut microbiota by controlling immunity to intestinal bacteria and fungi. Expressed in lamina propria dendritic cells in the small intestine, which form transepithelial dendrites capable of taking up bacteria in order to provide defense against pathogenic bacteria. Required to initiate innate and adaptive immune responses against dissemination of commensal fungi (mycobiota) component of the gut: expressed in mononuclear phagocytes (MNPs) and acts by promoting induction of antifungal IgG antibodies response to confer protection against disseminated C.albicans or C.auris infection. Also acts as a receptor for C-C motif chemokine CCL26, inducing cell chemotaxis. The polypeptide is CX3C chemokine receptor 1 (Oryctolagus cuniculus (Rabbit)).